The sequence spans 486 residues: Homoserine O-acetyltransferase (486 aa).

The AB hydrolase-1 domain maps to 66-436; it reads NVLVICHALT…PEGHDAFLLE (371 aa). The active site involves serine 162. The active-site Nucleophile is the serine 162. The tract at residues 248–274 is disordered; that stretch reads KFSRRSPSIAQQQKAQKAEVRKPSTVS. Residues 250 to 262 are compositionally biased toward polar residues; sequence SRRSPSIAQQQKA. Active-site residues include aspartate 401 and histidine 430.

The protein belongs to the AB hydrolase superfamily. MetX family.

The catalysed reaction is L-homoserine + acetyl-CoA = O-acetyl-L-homoserine + CoA. The protein operates within amino-acid biosynthesis; L-methionine biosynthesis via de novo pathway; O-acetyl-L-homoserine from L-homoserine: step 1/1. In terms of biological role, commits homoserine to the methionine biosynthesis pathway by catalyzing its O-acetylation. The polypeptide is Homoserine O-acetyltransferase (MET2) (Saccharomyces pastorianus (Lager yeast)).